The chain runs to 489 residues: Lysine--tRNA ligase (489 aa).

The Mg(2+) site is built by Glu398 and Glu405.

Belongs to the class-II aminoacyl-tRNA synthetase family. In terms of assembly, homodimer. It depends on Mg(2+) as a cofactor.

It is found in the cytoplasm. It catalyses the reaction tRNA(Lys) + L-lysine + ATP = L-lysyl-tRNA(Lys) + AMP + diphosphate. The protein is Lysine--tRNA ligase of Moorella thermoacetica (strain ATCC 39073 / JCM 9320).